Reading from the N-terminus, the 313-residue chain is Glyoxylate/hydroxypyruvate reductase A (313 aa).

R228 is an active-site residue. H276 (proton donor) is an active-site residue.

Belongs to the D-isomer specific 2-hydroxyacid dehydrogenase family. GhrA subfamily.

The protein resides in the cytoplasm. The catalysed reaction is glycolate + NADP(+) = glyoxylate + NADPH + H(+). It carries out the reaction (R)-glycerate + NAD(+) = 3-hydroxypyruvate + NADH + H(+). The enzyme catalyses (R)-glycerate + NADP(+) = 3-hydroxypyruvate + NADPH + H(+). In terms of biological role, catalyzes the NADPH-dependent reduction of glyoxylate and hydroxypyruvate into glycolate and glycerate, respectively. This is Glyoxylate/hydroxypyruvate reductase A from Yersinia enterocolitica serotype O:8 / biotype 1B (strain NCTC 13174 / 8081).